A 301-amino-acid chain; its full sequence is MLSEGYLSGLEYWNDIHWSCASYNEQVAGEKEEETNSVATLSYSSVDETQVRSLYVSCKSSGKFISSVHSRESQHSRSQRVTVLQTNPNPVFESPNLAAVEICRDASRETYLVPSSCKSICKNYNDLQIAGGQVMAINSVTTDFPSESSFEYGPLLKSSEIPLPMEDSISTQPSDFPQKPIQRYSSYWRITSIKEKSSLQMQNPISNAVLNEYLEQKVVELYKQYIMDTVFHDSSPTQILASELIMTSVDQISLQVSREKNLETSKARDIVFSRLLQLMSTEITEISTPSLHISQYSNVNP.

The pLxIS motif signature appears at 290–294; that stretch reads SLHIS. A Phosphoserine modification is found at serine 294.

In terms of assembly, interacts (via pLxIS motif) with IRF5; leading to IRF5 activation. Interacts with SLC15A4; leading to its recruitment to endolysosome. In terms of processing, the phosphorylated pLxIS motif constitutes an IRF5-binding motif, leading to recruitment of the transcription factor IRF5 to induce type-I interferons and other cytokines. In terms of tissue distribution, highly expressed in immune cell types such as B-cells, neutrophils, dendritic cells and monocytes, the expression levels are two-three-fold higher in female cells compared to male cells (at protein level). Expressed at low levels in T-cells and NK cells.

It is found in the lysosome membrane. Its subcellular location is the endosome membrane. The protein resides in the nucleus. It localises to the cytoplasm. Innate immune adapter that mediates the recruitment and activation of IRF5 downstream of endolysosomal toll-like receptors TLR7, TLR8 and TLR9. Following recruitment to endolysosome by SLC15A4 downstream of TLR7, TLR8 and TLR9, specifically recruits IRF5 transcription factor via its pLxIS motif, leading to IRF5 activation and subsequent expression of type I interferons. Plays a role in the regulation of endolysosomal pH in immune cells such as B-cells, dendritic cells and monocytes. In Homo sapiens (Human), this protein is TLR adapter interacting with SLC15A4 on the lysosome.